Consider the following 386-residue polypeptide: Succinate--CoA ligase [ADP-forming] subunit beta (386 aa).

One can recognise an ATP-grasp domain in the interval 9-244 (KEILRKYGVP…HDEEDPLETR (236 aa)). ATP-binding positions include Lys46, 53 to 55 (GRG), Glu99, Cys102, and Glu107. The Mg(2+) site is built by Asn199 and Asp213. Residues Asn264 and 321 to 323 (GIM) each bind substrate.

The protein belongs to the succinate/malate CoA ligase beta subunit family. As to quaternary structure, heterotetramer of two alpha and two beta subunits. Mg(2+) serves as cofactor.

The catalysed reaction is succinate + ATP + CoA = succinyl-CoA + ADP + phosphate. The enzyme catalyses GTP + succinate + CoA = succinyl-CoA + GDP + phosphate. The protein operates within carbohydrate metabolism; tricarboxylic acid cycle; succinate from succinyl-CoA (ligase route): step 1/1. Its function is as follows. Succinyl-CoA synthetase functions in the citric acid cycle (TCA), coupling the hydrolysis of succinyl-CoA to the synthesis of either ATP or GTP and thus represents the only step of substrate-level phosphorylation in the TCA. The beta subunit provides nucleotide specificity of the enzyme and binds the substrate succinate, while the binding sites for coenzyme A and phosphate are found in the alpha subunit. This is Succinate--CoA ligase [ADP-forming] subunit beta from Rickettsia typhi (strain ATCC VR-144 / Wilmington).